A 315-amino-acid chain; its full sequence is 4-carboxy-2-hydroxymuconate-6-semialdehyde dehydrogenase (315 aa).

Belongs to the Gfo/Idh/MocA family. As to quaternary structure, homodimer.

The catalysed reaction is 4-carboxy-2-hydroxymuconate semialdehyde hemiacetal + NADP(+) = 2-oxo-2H-pyran-4,6-dicarboxylate + NADPH + H(+). The protein operates within secondary metabolite metabolism; lignin degradation. Inhibited by p-chloromercuribenzoate (10 mM), HgCl2 (10 mM), or 5,5-dithiobis(2-nitrobenzoate) (100 mM). Involved in the degradation of protocatechuate (PCA) via the PCA 4,5-cleavage pathway. Catalyzes the oxidation of the hemiacetal form of 4-carboxy-2-hydroxymuconate-6-semialdehyde (CHMS) to produce 2-pyrone-4,6-dicarboxylate (PDC). LigC has 10-times-higher affinity to NADP than to NAD. This is 4-carboxy-2-hydroxymuconate-6-semialdehyde dehydrogenase (ligC) from Sphingobium sp. (strain NBRC 103272 / SYK-6).